A 408-amino-acid polypeptide reads, in one-letter code: Argininosuccinate synthase (408 aa).

ATP-binding positions include 10-18 (AYSGGLDTS) and Ala-37. Residues Tyr-90 and Ser-95 each contribute to the L-citrulline site. Residue Gly-120 coordinates ATP. Residues Thr-122, Asn-126, and Asp-127 each contribute to the L-aspartate site. Asn-126 provides a ligand contact to L-citrulline. L-citrulline-binding residues include Arg-130, Ser-182, Ser-191, Glu-267, and Tyr-279.

It belongs to the argininosuccinate synthase family. Type 1 subfamily. In terms of assembly, homotetramer.

It is found in the cytoplasm. It catalyses the reaction L-citrulline + L-aspartate + ATP = 2-(N(omega)-L-arginino)succinate + AMP + diphosphate + H(+). It functions in the pathway amino-acid biosynthesis; L-arginine biosynthesis; L-arginine from L-ornithine and carbamoyl phosphate: step 2/3. The chain is Argininosuccinate synthase from Paraburkholderia xenovorans (strain LB400).